The following is a 111-amino-acid chain: Probable 4-amino-4-deoxy-L-arabinose-phosphoundecaprenol flippase subunit ArnE (111 aa).

3 consecutive transmembrane segments (helical) span residues 38-58 (LWLG…LLVL), 61-81 (LPVG…TLAA), and 91-111 (PRHW…GSAA). The 70-residue stretch at 40 to 109 (LGLALICMGA…IISGIIILGS (70 aa)) folds into the EamA domain.

It belongs to the ArnE family. As to quaternary structure, heterodimer of ArnE and ArnF.

It is found in the cell inner membrane. Its pathway is bacterial outer membrane biogenesis; lipopolysaccharide biosynthesis. In terms of biological role, translocates 4-amino-4-deoxy-L-arabinose-phosphoundecaprenol (alpha-L-Ara4N-phosphoundecaprenol) from the cytoplasmic to the periplasmic side of the inner membrane. This is Probable 4-amino-4-deoxy-L-arabinose-phosphoundecaprenol flippase subunit ArnE from Salmonella enteritidis PT4 (strain P125109).